Reading from the N-terminus, the 129-residue chain is Aspartate 1-decarboxylase (129 aa).

S25 serves as the catalytic Schiff-base intermediate with substrate; via pyruvic acid. Pyruvic acid (Ser) is present on S25. T57 contributes to the substrate binding site. Residue Y58 is the Proton donor of the active site. Residue 73–75 (GAA) participates in substrate binding.

The protein belongs to the PanD family. As to quaternary structure, heterooctamer of four alpha and four beta subunits. The cofactor is pyruvate. Post-translationally, is synthesized initially as an inactive proenzyme, which is activated by self-cleavage at a specific serine bond to produce a beta-subunit with a hydroxyl group at its C-terminus and an alpha-subunit with a pyruvoyl group at its N-terminus.

It is found in the cytoplasm. The enzyme catalyses L-aspartate + H(+) = beta-alanine + CO2. It participates in cofactor biosynthesis; (R)-pantothenate biosynthesis; beta-alanine from L-aspartate: step 1/1. In terms of biological role, catalyzes the pyruvoyl-dependent decarboxylation of aspartate to produce beta-alanine. In Prosthecochloris aestuarii (strain DSM 271 / SK 413), this protein is Aspartate 1-decarboxylase.